The sequence spans 251 residues: tRNA-uridine aminocarboxypropyltransferase 2 (251 aa).

Zn(2+) contacts are provided by C23, C26, C33, and C35. The short motif at 131–134 (DGTW) is the DXTW element.

The protein belongs to the TDD superfamily. DTWD2 family.

It catalyses the reaction a uridine in tRNA + S-adenosyl-L-methionine = a 3-[(3S)-3-amino-3-carboxypropyl]uridine in tRNA + S-methyl-5'-thioadenosine + H(+). Functionally, catalyzes the formation of 3-(3-amino-3-carboxypropyl)uridine (acp3U) at position 20a in the D-loop of several cytoplasmic tRNAs (acp3U(20a)). This Drosophila melanogaster (Fruit fly) protein is tRNA-uridine aminocarboxypropyltransferase 2.